Here is a 281-residue protein sequence, read N- to C-terminus: 2-C-methyl-D-erythritol 4-phosphate cytidylyltransferase (281 aa).

It belongs to the IspD/TarI cytidylyltransferase family. IspD subfamily.

It carries out the reaction 2-C-methyl-D-erythritol 4-phosphate + CTP + H(+) = 4-CDP-2-C-methyl-D-erythritol + diphosphate. Its pathway is isoprenoid biosynthesis; isopentenyl diphosphate biosynthesis via DXP pathway; isopentenyl diphosphate from 1-deoxy-D-xylulose 5-phosphate: step 2/6. Functionally, catalyzes the formation of 4-diphosphocytidyl-2-C-methyl-D-erythritol from CTP and 2-C-methyl-D-erythritol 4-phosphate (MEP). The polypeptide is 2-C-methyl-D-erythritol 4-phosphate cytidylyltransferase (Psychrobacter arcticus (strain DSM 17307 / VKM B-2377 / 273-4)).